Reading from the N-terminus, the 361-residue chain is DNA replication and repair protein RecF (361 aa).

30–37 (GPNGSGKT) contacts ATP.

This sequence belongs to the RecF family.

It localises to the cytoplasm. Its function is as follows. The RecF protein is involved in DNA metabolism; it is required for DNA replication and normal SOS inducibility. RecF binds preferentially to single-stranded, linear DNA. It also seems to bind ATP. This chain is DNA replication and repair protein RecF, found in Yersinia pseudotuberculosis serotype O:1b (strain IP 31758).